A 992-amino-acid polypeptide reads, in one-letter code: Disks large-associated protein 1 (992 aa).

Disordered regions lie at residues 154–209 (SLEG…SWWS) and 355–375 (KAMGDEDSGDSDTSPKPSPKV). Position 169 is a phosphoserine (Ser-169). Residues 195–209 (SNASNASPTSPSWWS) show a composition bias toward low complexity. Phosphoserine occurs at positions 362, 365, 368, 372, 389, 418, 421, 425, 428, 437, 509, 516, and 578. Thr-579 is modified (phosphothreonine). Ser-581 and Ser-605 each carry phosphoserine. Thr-606 carries the phosphothreonine modification. Phosphoserine occurs at positions 608 and 611. 2 interaction with DYL2 regions span residues 665–676 (LSIGIQVDDAEE) and 687–698 (SKFQSVGVQVEE). The disordered stretch occupies residues 914 to 980 (WKQMDPLDKK…QNSATESAES (67 aa)). 2 stretches are compositionally biased toward basic and acidic residues: residues 918-927 (DPLDKKERRA) and 943-958 (IRERSLESSQRQEARK). The residue at position 947 (Ser-947) is a Phosphoserine. Over residues 969–978 (VRQNSATESA) the composition is skewed to polar residues. The PDZ-binding motif lies at 990–992 (TRL).

This sequence belongs to the SAPAP family. Interacts with guanylate kinase-like domain of DLG1, DLG2, DLG3, DLG4 and AIP1. Interacts with the PDZ domain of SHANK1, SHANK2 and SHANK3. Found in a complex with DLG4 and SHANK1, SHANK2 or SHANK3. Found in a complex with DLG4 and BEGAIN. Interacts with DYL2 and LRFN1. Interacts with MPP2 (via the SH3-Guanylate kinase-like sub-module). In terms of processing, ubiquitinated by TRIM3; leading to proteasomal degradation. As to expression, expressed in brain and testis.

The protein localises to the cell membrane. The protein resides in the postsynaptic density. Its subcellular location is the synapse. Its function is as follows. Part of the postsynaptic scaffold in neuronal cells. The sequence is that of Disks large-associated protein 1 from Rattus norvegicus (Rat).